Reading from the N-terminus, the 501-residue chain is Archaemetzincin-1 (501 aa).

His-261 contributes to the Zn(2+) binding site. The active-site Proton acceptor is Glu-262. Residues His-265, Cys-272, Cys-277, Cys-296, and Cys-299 each contribute to the Zn(2+) site. The tract at residues 349-370 is disordered; it reads DSGMGCESDTEPVTSPSEPVTP.

Belongs to the peptidase M54 family. The cofactor is Zn(2+).

In terms of biological role, probable zinc metalloprotease. This chain is Archaemetzincin-1 (Amz1), found in Rattus norvegicus (Rat).